A 284-amino-acid chain; its full sequence is Bifunctional protein FolD (284 aa).

NADP(+) is bound by residues 164 to 166 and S189; that span reads GRS.

This sequence belongs to the tetrahydrofolate dehydrogenase/cyclohydrolase family. In terms of assembly, homodimer.

The catalysed reaction is (6R)-5,10-methylene-5,6,7,8-tetrahydrofolate + NADP(+) = (6R)-5,10-methenyltetrahydrofolate + NADPH. It carries out the reaction (6R)-5,10-methenyltetrahydrofolate + H2O = (6R)-10-formyltetrahydrofolate + H(+). It functions in the pathway one-carbon metabolism; tetrahydrofolate interconversion. Functionally, catalyzes the oxidation of 5,10-methylenetetrahydrofolate to 5,10-methenyltetrahydrofolate and then the hydrolysis of 5,10-methenyltetrahydrofolate to 10-formyltetrahydrofolate. The protein is Bifunctional protein FolD of Listeria monocytogenes serotype 4a (strain HCC23).